Reading from the N-terminus, the 255-residue chain is Small ribosomal subunit protein eS1 (255 aa).

A2 carries the N-acetylalanine; partial modification.

Belongs to the eukaryotic ribosomal protein eS1 family. Component of the small ribosomal subunit. Mature ribosomes consist of a small (40S) and a large (60S) subunit. The 40S subunit contains about 33 different proteins and 1 molecule of RNA (18S). The 60S subunit contains about 49 different proteins and 3 molecules of RNA (25S, 5.8S and 5S).

Its subcellular location is the cytoplasm. In Candida glabrata (strain ATCC 2001 / BCRC 20586 / JCM 3761 / NBRC 0622 / NRRL Y-65 / CBS 138) (Yeast), this protein is Small ribosomal subunit protein eS1.